The chain runs to 393 residues: Acetylornithine aminotransferase (393 aa).

Pyridoxal 5'-phosphate-binding positions include 100–101 (GT) and phenylalanine 132. Arginine 135 contributes to the N(2)-acetyl-L-ornithine binding site. Pyridoxal 5'-phosphate is bound at residue 217-220 (DEIQ). Residue lysine 246 is modified to N6-(pyridoxal phosphate)lysine. Serine 275 provides a ligand contact to N(2)-acetyl-L-ornithine. Threonine 276 contributes to the pyridoxal 5'-phosphate binding site.

Belongs to the class-III pyridoxal-phosphate-dependent aminotransferase family. ArgD subfamily. In terms of assembly, homodimer. Requires pyridoxal 5'-phosphate as cofactor.

Its subcellular location is the cytoplasm. The catalysed reaction is N(2)-acetyl-L-ornithine + 2-oxoglutarate = N-acetyl-L-glutamate 5-semialdehyde + L-glutamate. Its pathway is amino-acid biosynthesis; L-arginine biosynthesis; N(2)-acetyl-L-ornithine from L-glutamate: step 4/4. This is Acetylornithine aminotransferase from Campylobacter jejuni subsp. jejuni serotype O:2 (strain ATCC 700819 / NCTC 11168).